The chain runs to 820 residues: Phenylalanine--tRNA ligase beta subunit (820 aa).

One can recognise a tRNA-binding domain in the interval 42–154; the sequence is KGGLEGLVIG…EDAVPGTLAK (113 aa). Residues 413-489 form the B5 domain; the sequence is AQDFIVELTY…RIYGYNNVEI (77 aa). Mg(2+) is bound by residues D467, D473, E476, and D477. The region spanning 727–820 is the FDX-ACB domain; that stretch reads SKFPAVKRDL…LEDKLGAKLR (94 aa).

This sequence belongs to the phenylalanyl-tRNA synthetase beta subunit family. Type 1 subfamily. Tetramer of two alpha and two beta subunits. Mg(2+) serves as cofactor.

Its subcellular location is the cytoplasm. It catalyses the reaction tRNA(Phe) + L-phenylalanine + ATP = L-phenylalanyl-tRNA(Phe) + AMP + diphosphate + H(+). This Bacteroides fragilis (strain YCH46) protein is Phenylalanine--tRNA ligase beta subunit.